Reading from the N-terminus, the 400-residue chain is Argininosuccinate synthase (400 aa).

ATP is bound by residues 10-18 and A38; that span reads AYSGGVDTS. Y89 contacts L-citrulline. G119 lines the ATP pocket. T121, N125, and D126 together coordinate L-aspartate. Position 125 (N125) interacts with L-citrulline. L-citrulline contacts are provided by R129, S177, S186, E262, and Y274.

It belongs to the argininosuccinate synthase family. Type 1 subfamily. As to quaternary structure, homotetramer.

Its subcellular location is the cytoplasm. The catalysed reaction is L-citrulline + L-aspartate + ATP = 2-(N(omega)-L-arginino)succinate + AMP + diphosphate + H(+). It functions in the pathway amino-acid biosynthesis; L-arginine biosynthesis; L-arginine from L-ornithine and carbamoyl phosphate: step 2/3. This chain is Argininosuccinate synthase, found in Nostoc sp. (strain PCC 7120 / SAG 25.82 / UTEX 2576).